Here is a 490-residue protein sequence, read N- to C-terminus: 4-hydroxybutyryl-CoA dehydratase/vinylacetyl-CoA-Delta-isomerase (490 aa).

2 residues coordinate [4Fe-4S] cluster: Cys99 and Cys103. Residues 149 to 156 (MTDPKGDR) and 188 to 190 (HQT) each bind FAD. The [4Fe-4S] cluster site is built by His292 and Cys299. Residues His325 and 386–390 (DIAGG) each bind FAD.

As to quaternary structure, homotetramer. FAD is required as a cofactor. Requires [4Fe-4S] cluster as cofactor.

The enzyme catalyses 4-hydroxybutanoyl-CoA = (2E)-butenoyl-CoA + H2O. The catalysed reaction is vinylacetyl-CoA = (2E)-butenoyl-CoA. Functionally, catalyzes the reversible conversion of 4-hydroxybutyryl-CoA to crotonyl-CoA. The mechanism of the reaction seems to go through three steps: (1) the FAD-dependent oxidation of 4-hydroxybutyryl-CoA to 4-hydroxycrotonyl-CoA; (2) the hydroxyl group is substituted by a hydride derived from the now reduced FAD in an SN2' reaction leading to vinylacetyl-CoA; (3) isomerization to yield crotonyl-CoA. The polypeptide is 4-hydroxybutyryl-CoA dehydratase/vinylacetyl-CoA-Delta-isomerase (abfD) (Clostridium aminobutyricum).